We begin with the raw amino-acid sequence, 404 residues long: Multidrug resistance protein MdtG (404 aa).

Transmembrane regions (helical) follow at residues 19–39 (LGCF…PLYV), 56–76 (LVFS…GGLA), 90–110 (LGMA…QFLI), 113–133 (ALLG…ATQV), 144–164 (TLST…GLLA), 171–191 (PVFF…FFFI), 222–242 (LFVT…ILTL), 254–274 (IAFI…LSAP), 288–308 (ILIV…FVQT), 317–337 (FLLG…LVYN), and 376–396 (AVFC…WNSL).

It belongs to the major facilitator superfamily. DHA1 family. MdtG (TC 2.A.1.2.20) subfamily.

It is found in the cell inner membrane. The polypeptide is Multidrug resistance protein MdtG (Salmonella choleraesuis (strain SC-B67)).